Consider the following 203-residue polypeptide: Outer-membrane lipoprotein carrier protein (203 aa).

A signal peptide spans methionine 1–alanine 21.

Belongs to the LolA family. Monomer.

Its subcellular location is the periplasm. Functionally, participates in the translocation of lipoproteins from the inner membrane to the outer membrane. Only forms a complex with a lipoprotein if the residue after the N-terminal Cys is not an aspartate (The Asp acts as a targeting signal to indicate that the lipoprotein should stay in the inner membrane). The protein is Outer-membrane lipoprotein carrier protein of Serratia proteamaculans (strain 568).